Reading from the N-terminus, the 415-residue chain is UDP-N-acetylglucosamine 1-carboxyvinyltransferase 1 (415 aa).

23 to 24 is a binding site for phosphoenolpyruvate; sequence KN. UDP-N-acetyl-alpha-D-glucosamine is bound at residue Arg92. The active-site Proton donor is Cys116. Cys116 carries the 2-(S-cysteinyl)pyruvic acid O-phosphothioketal modification. UDP-N-acetyl-alpha-D-glucosamine-binding positions include 121–125, Asp304, and Val326; that span reads RPIDL.

Belongs to the EPSP synthase family. MurA subfamily.

Its subcellular location is the cytoplasm. It catalyses the reaction phosphoenolpyruvate + UDP-N-acetyl-alpha-D-glucosamine = UDP-N-acetyl-3-O-(1-carboxyvinyl)-alpha-D-glucosamine + phosphate. Its pathway is cell wall biogenesis; peptidoglycan biosynthesis. In terms of biological role, cell wall formation. Adds enolpyruvyl to UDP-N-acetylglucosamine. The sequence is that of UDP-N-acetylglucosamine 1-carboxyvinyltransferase 1 from Caldanaerobacter subterraneus subsp. tengcongensis (strain DSM 15242 / JCM 11007 / NBRC 100824 / MB4) (Thermoanaerobacter tengcongensis).